The following is a 705-amino-acid chain: MMQESGSETKSNGSAIQNGSSGGNHLLECGALRDTRSNGEAPAVDLGAADLAHVQQQQQQALQVARQLLLQQQQQQQQQQQQQQQQQQQQQQQQQQQQQQQQQQQQQVSGLKSPKRNDKQPALQVPVSVAMMTPQVITPQQMQQILQQQVLSPQQLQVLLQQQQALMLQQQLQEFYKKQQEQLQLQLLQQQHAGKQPKEQQVATQQLAFQQQLLQMQQLQQQHLLSLQRQGLLTIQPGQPALPLQPLAQGMIPTELQQLWKEVTSAHTAEETTSSNHSSLDLTSTCVSSSAPSKSSLIMNPHASTNGQLSVHTPKRESLSHEEHPHSHPLYGHGVCKWPGCEAVCDDFPAFLKHLNSEHALDDRSTAQCRVQMQVVQQLELQLAKDKERLQAMMTHLHVKSTEPKAAPQPLNLVSSVTLSKSASEASPQSLPHTPTTPTAPLTPVTQGPSVITTTSMHTVGPIRRRYSDKYNVPISSADIAQNQEFYKNAEVRPPFTYASLIRQAILESPEKQLTLNEIYNWFTRMFAYFRRNAATWKNAVRHNLSLHKCFVRVENVKGAVWTVDEVEFQKRRPQKISGNPSLIKNMQSSHAYCTPLNAALQASMAENSIPLYTTASMGNPTLGSLASAIREELNGAMEHTNSNESDSSPGRSPMQAVHPIHVKEEPLDPEEAEGPLSLVTTANHSPDFDHDRDYEDEPVNEDME.

A compositionally biased stretch (polar residues) spans 1 to 19; sequence MMQESGSETKSNGSAIQNG. The segment at 1-41 is disordered; sequence MMQESGSETKSNGSAIQNGSSGGNHLLECGALRDTRSNGEA. Phosphoserine is present on S113. Disordered regions lie at residues 267–286 and 291–326; these read HTAE…TSTC and APSK…EHPH. Polar residues-rich tracts occupy residues 276 to 286 and 291 to 311; these read NHSSLDLTSTC and APSK…QLSV. Residues 314-326 are compositionally biased toward basic and acidic residues; sequence PKRESLSHEEHPH. K315 participates in a covalent cross-link: Glycyl lysine isopeptide (Lys-Gly) (interchain with G-Cter in SUMO2). Residues 334–359 form a C2H2-type zinc finger; the sequence is GVCKWPGCEAVCDDFPAFLKHLNSEH. The segment at 376–397 is leucine-zipper; it reads VQQLELQLAKDKERLQAMMTHL. Glycyl lysine isopeptide (Lys-Gly) (interchain with G-Cter in SUMO2) cross-links involve residues K400 and K405. The CTBP1-binding stretch occupies residues 410 to 414; it reads PLNLV. Over residues 418 to 431 the composition is skewed to polar residues; that stretch reads TLSKSASEASPQSL. The interval 418-450 is disordered; the sequence is TLSKSASEASPQSLPHTPTTPTAPLTPVTQGPS. Residues 432–446 show a composition bias toward low complexity; sequence PHTPTTPTAPLTPVT. K470 participates in a covalent cross-link: Glycyl lysine isopeptide (Lys-Gly) (interchain with G-Cter in SUMO2). The fork-head DNA-binding region spans 493–583; sequence RPPFTYASLI…PQKISGNPSL (91 aa). The segment at 639 to 705 is disordered; it reads EHTNSNESDS…EDEPVNEDME (67 aa). Positions 640 to 651 are enriched in polar residues; that stretch reads HTNSNESDSSPG. Position 681 is a phosphothreonine (T681). S686 is subject to Phosphoserine. Residues 695–705 are compositionally biased toward acidic residues; sequence YEDEPVNEDME.

As to quaternary structure, forms homodimers and heterodimers with FOXP2 and FOXP4. Dimerization is required for DNA-binding. Self-associates. Interacts with CTBP1. Interacts with NCOR2 and AR. Interacts with FOXP2. Interacts with TBR1. Interacts with AURKA; this interaction facilitates the phosphorylation of FOXP1, which suppresses the expression of FBXL7. Interacts with ZMYM2. Isoform 5 is specifically expressed in embryonic stem cells. Highest expression in the lung, brain, and spleen. Lower expression in heart, skeletal muscle, kidney, small intestine (isoform 3 not present) and liver.

It is found in the nucleus. Its function is as follows. Transcriptional repressor. Can act with CTBP1 to synergistically repress transcription but CTPBP1 is not essential. Plays an important role in the specification and differentiation of lung epithelium. Acts cooperatively with FOXP4 to regulate lung secretory epithelial cell fate and regeneration by restricting the goblet cell lineage program; the function may involve regulation of AGR2. Essential transcriptional regulator of B-cell development. Involved in regulation of cardiac muscle cell proliferation. Involved in the columnar organization of spinal motor neurons. Promotes the formation of the lateral motor neuron column (LMC) and the preganglionic motor column (PGC) and is required for respective appropriate motor axon projections. The segment-appropriate generation of spinal cord motor columns requires cooperation with other Hox proteins. Can regulate PITX3 promoter activity; may promote midbrain identity in embryonic stem cell-derived dopamine neurons by regulating PITX3. Negatively regulates the differentiation of T follicular helper cells T(FH)s. Involved in maintenance of hair follicle stem cell quiescence; the function probably involves regulation of FGF18. Represses transcription of various pro-apoptotic genes and cooperates with NF-kappa B-signaling in promoting B-cell expansion by inhibition of caspase-dependent apoptosis. Binds to CSF1R promoter elements and is involved in regulation of monocyte differentiation and macrophage functions; repression of CSF1R in monocytes seems to involve NCOR2 as corepressor. Involved in endothelial cell proliferation, tube formation and migration indicative for a role in angiogenesis; the role in neovascularization seems to implicate suppression of SEMA5B. Can negatively regulate androgen receptor signaling. Acts as a transcriptional activator of the FBXL7 promoter; this activity is regulated by AURKA. In terms of biological role, involved in transcriptional regulation in embryonic stem cells (ESCs). Stimulates expression of transcription factors that are required for pluripotency and decreases expression of differentiation-associated genes. Has distinct DNA-binding specifities as compared to the canonical form and preferentially binds DNA with the sequence 5'-CGATACAA-3' (or closely related sequences). Promotes ESC self-renewal and pluripotency. This is Forkhead box protein P1 (Foxp1) from Mus musculus (Mouse).